The primary structure comprises 180 residues: Putative methyltransferase YrhH (180 aa).

It belongs to the methyltransferase superfamily.

This chain is Putative methyltransferase YrhH (yrhH), found in Bacillus subtilis (strain 168).